Consider the following 156-residue polypeptide: Cyanate hydratase (156 aa).

Residues Arg-96, Glu-99, and Ser-122 contribute to the active site.

Belongs to the cyanase family.

It catalyses the reaction cyanate + hydrogencarbonate + 3 H(+) = NH4(+) + 2 CO2. Its function is as follows. Catalyzes the reaction of cyanate with bicarbonate to produce ammonia and carbon dioxide. This Escherichia coli O9:H4 (strain HS) protein is Cyanate hydratase.